A 485-amino-acid chain; its full sequence is NADH-quinone oxidoreductase subunit N (485 aa).

The next 14 helical transmembrane spans lie at 8-28 (LIAL…MLCI), 35-55 (FVNA…LYFV), 75-95 (FYTG…YPWL), 105-125 (FYLL…ANHL), 127-147 (SLFI…GYAF), 159-179 (YMLL…LIYA), 203-223 (LLAG…LVPF), 235-255 (PAPV…GAVM), 271-291 (IVLS…AVSQ), 297-317 (LLGY…IAVQ), 326-346 (VGVY…VVSL), 374-394 (AVMT…GFFG), 407-426 (LWWL…YYYL), and 449-469 (ALTA…FFGL).

The protein belongs to the complex I subunit 2 family. In terms of assembly, NDH-1 is composed of 13 different subunits. Subunits NuoA, H, J, K, L, M, N constitute the membrane sector of the complex.

Its subcellular location is the cell inner membrane. It carries out the reaction a quinone + NADH + 5 H(+)(in) = a quinol + NAD(+) + 4 H(+)(out). In terms of biological role, NDH-1 shuttles electrons from NADH, via FMN and iron-sulfur (Fe-S) centers, to quinones in the respiratory chain. The immediate electron acceptor for the enzyme in this species is believed to be ubiquinone. Couples the redox reaction to proton translocation (for every two electrons transferred, four hydrogen ions are translocated across the cytoplasmic membrane), and thus conserves the redox energy in a proton gradient. The sequence is that of NADH-quinone oxidoreductase subunit N from Pectobacterium atrosepticum (strain SCRI 1043 / ATCC BAA-672) (Erwinia carotovora subsp. atroseptica).